Reading from the N-terminus, the 324-residue chain is Quinolinate synthase 1 (324 aa).

Iminosuccinate contacts are provided by His-48 and Ser-66. A [4Fe-4S] cluster-binding site is contributed by Cys-111. Residues 137 to 139 and Ser-154 each bind iminosuccinate; that span reads YVN. Cys-196 contributes to the [4Fe-4S] cluster binding site. Iminosuccinate is bound by residues 222–224 and Thr-239; that span reads HPE. Cys-282 contributes to the [4Fe-4S] cluster binding site.

The protein belongs to the quinolinate synthase family. Type 2 subfamily. Requires [4Fe-4S] cluster as cofactor.

The protein resides in the cytoplasm. The catalysed reaction is iminosuccinate + dihydroxyacetone phosphate = quinolinate + phosphate + 2 H2O + H(+). It functions in the pathway cofactor biosynthesis; NAD(+) biosynthesis; quinolinate from iminoaspartate: step 1/1. Functionally, catalyzes the condensation of iminoaspartate with dihydroxyacetone phosphate to form quinolinate. This Mesorhizobium japonicum (strain LMG 29417 / CECT 9101 / MAFF 303099) (Mesorhizobium loti (strain MAFF 303099)) protein is Quinolinate synthase 1.